A 313-amino-acid chain; its full sequence is Protochlorophyllide reductase (313 aa).

This sequence belongs to the short-chain dehydrogenases/reductases (SDR) family. POR subfamily.

It localises to the plastid. The protein resides in the chloroplast. The enzyme catalyses chlorophyllide a + NADP(+) = protochlorophyllide a + NADPH + H(+). The protein operates within porphyrin-containing compound metabolism; chlorophyll biosynthesis. In terms of biological role, phototransformation of protochlorophyllide (Pchlide) to chlorophyllide (Chlide). The sequence is that of Protochlorophyllide reductase from Avena sativa (Oat).